The primary structure comprises 306 residues: Protein STPG3 (306 aa).

The disordered stretch occupies residues 210 to 230; that stretch reads CSYTPLLPTSKPSGEKRPSPN.

The chain is Protein STPG3 from Mus musculus (Mouse).